A 541-amino-acid polypeptide reads, in one-letter code: Membrane protein insertase YidC (541 aa).

A helical membrane pass occupies residues Ser-6 to Asp-26. The tract at residues Glu-34 to Ile-56 is disordered. A run of 4 helical transmembrane segments spans residues Phe-337 to Val-357, Leu-416 to Phe-436, Leu-454 to Leu-474, and Pro-495 to Val-515.

It belongs to the OXA1/ALB3/YidC family. Type 1 subfamily. Interacts with the Sec translocase complex via SecD. Specifically interacts with transmembrane segments of nascent integral membrane proteins during membrane integration.

The protein localises to the cell inner membrane. Functionally, required for the insertion and/or proper folding and/or complex formation of integral membrane proteins into the membrane. Involved in integration of membrane proteins that insert both dependently and independently of the Sec translocase complex, as well as at least some lipoproteins. Aids folding of multispanning membrane proteins. In Haemophilus influenzae (strain ATCC 51907 / DSM 11121 / KW20 / Rd), this protein is Membrane protein insertase YidC.